Here is a 226-residue protein sequence, read N- to C-terminus: Putative ABC transporter ATP-binding protein DR_2469 (226 aa).

One can recognise an ABC transporter domain in the interval 2–225 (IELRHVSHHY…LRVYRERMTW (224 aa)). 33–40 (GSNGSGKS) serves as a coordination point for ATP.

This sequence belongs to the ABC transporter superfamily.

It localises to the cell membrane. Probably part of an ABC transporter complex. Responsible for energy coupling to the transport system. In Deinococcus radiodurans (strain ATCC 13939 / DSM 20539 / JCM 16871 / CCUG 27074 / LMG 4051 / NBRC 15346 / NCIMB 9279 / VKM B-1422 / R1), this protein is Putative ABC transporter ATP-binding protein DR_2469.